The primary structure comprises 463 residues: Glycine--tRNA ligase (463 aa).

Substrate is bound by residues arginine 100 and glutamate 175. ATP is bound by residues arginine 207 to glutamate 209, phenylalanine 217 to phenylalanine 222, glutamate 291 to leucine 292, and glycine 335 to arginine 338. Residue phenylalanine 222–glutamate 226 participates in substrate binding. Glutamate 331 to glycine 335 contributes to the substrate binding site.

It belongs to the class-II aminoacyl-tRNA synthetase family. In terms of assembly, homodimer.

The protein localises to the cytoplasm. The catalysed reaction is tRNA(Gly) + glycine + ATP = glycyl-tRNA(Gly) + AMP + diphosphate. Functionally, catalyzes the attachment of glycine to tRNA(Gly). The chain is Glycine--tRNA ligase from Clostridium beijerinckii (strain ATCC 51743 / NCIMB 8052) (Clostridium acetobutylicum).